The following is a 462-amino-acid chain: Argininosuccinate lyase (462 aa).

Belongs to the lyase 1 family. Argininosuccinate lyase subfamily.

Its subcellular location is the cytoplasm. The enzyme catalyses 2-(N(omega)-L-arginino)succinate = fumarate + L-arginine. The protein operates within amino-acid biosynthesis; L-arginine biosynthesis; L-arginine from L-ornithine and carbamoyl phosphate: step 3/3. The polypeptide is Argininosuccinate lyase (Bacillus anthracis (strain A0248)).